The sequence spans 660 residues: Arginine--tRNA ligase, cytoplasmic (660 aa).

Methionine 1 is modified (N-acetylmethionine). Residues 1-72 (MDALVAHCSA…QAERNKPTKT (72 aa)) form a could be involved in the assembly of the multisynthetase complex region. L-arginine-binding positions include 200-202 (SPN), histidine 211, tyrosine 384, aspartate 388, and glutamine 412. Positions 201-212 (PNIAKEMHVGHL) match the 'HIGH' region motif. The interval 529–543 (NTAAYLLYAFTRIRS) is interaction with tRNA.

This sequence belongs to the class-I aminoacyl-tRNA synthetase family. Interacts (via N-terminus) with AIMP1 (via N-terminus); this stimulates its catalytic activity. Interacts (via N-terminus) with LARS2 (via C-terminus). Monomer. Part of a multisubunit complex that groups tRNA ligases for Arg (RARS1), Asp (DARS1), Gln (QARS1), Ile (IARS1), Leu (LARS1), Lys (KARS1), Met (MARS1) the bifunctional ligase for Glu and Pro (EPRS1) and the auxiliary subunits AIMP1/p43, AIMP2/p38 and EEF1E1/p18. Interacts with QARS1. Part of a complex composed of RARS1, QARS1 and AIMP1.

It localises to the cytoplasm. The protein resides in the cytosol. The enzyme catalyses tRNA(Arg) + L-arginine + ATP = L-arginyl-tRNA(Arg) + AMP + diphosphate. Forms part of a macromolecular complex that catalyzes the attachment of specific amino acids to cognate tRNAs during protein synthesis. Modulates the secretion of AIMP1 and may be involved in generation of the inflammatory cytokine EMAP2 from AIMP1. The polypeptide is Arginine--tRNA ligase, cytoplasmic (RARS1) (Bos taurus (Bovine)).